The chain runs to 97 residues: Citrate lyase acyl carrier protein 2 (97 aa).

The residue at position 14 (Ser14) is an O-(phosphoribosyl dephospho-coenzyme A)serine.

Belongs to the CitD family. Oligomer with a subunit composition of (alpha,beta,gamma)6.

It localises to the cytoplasm. In terms of biological role, covalent carrier of the coenzyme of citrate lyase. The chain is Citrate lyase acyl carrier protein 2 from Salmonella paratyphi A (strain ATCC 9150 / SARB42).